The primary structure comprises 247 residues: NADH dehydrogenase [ubiquinone] flavoprotein 2, mitochondrial (247 aa).

The N-terminal 40 residues, 1–40, are a transit peptide targeting the mitochondrion; that stretch reads MFRSLLKRTTFLNQLNKSNGFNRNYFKQSTLTRSDALSRH. [2Fe-2S] cluster contacts are provided by Cys135, Cys140, Cys176, and Cys180. The tract at residues 211-247 is disordered; that stretch reads NKPTKIGPQTHRKAAEGPQGKTTLLEPPVGPTCRDDL.

Belongs to the complex I 24 kDa subunit family. As to quaternary structure, complex I is composed of 45 different subunits. This is a component of the flavoprotein-sulfur (FP) fragment of the enzyme. It depends on [2Fe-2S] cluster as a cofactor.

Its subcellular location is the mitochondrion inner membrane. It catalyses the reaction a ubiquinone + NADH + 5 H(+)(in) = a ubiquinol + NAD(+) + 4 H(+)(out). Its function is as follows. Core subunit of the mitochondrial membrane respiratory chain NADH dehydrogenase (Complex I) that is believed to belong to the minimal assembly required for catalysis. Complex I functions in the transfer of electrons from NADH to the respiratory chain. The immediate electron acceptor for the enzyme is believed to be ubiquinone. This Dictyostelium discoideum (Social amoeba) protein is NADH dehydrogenase [ubiquinone] flavoprotein 2, mitochondrial (ndufv2).